Consider the following 153-residue polypeptide: ATP synthase subunit b' (153 aa).

The chain crosses the membrane as a helical span at residues 23-40; the sequence is LMAIQVVALTYILNSLFF.

It belongs to the ATPase B chain family. In terms of assembly, F-type ATPases have 2 components, F(1) - the catalytic core - and F(0) - the membrane proton channel. F(1) has five subunits: alpha(3), beta(3), gamma(1), delta(1), epsilon(1). F(0) has four main subunits: a(1), b(1), b'(1) and c(10-14). The alpha and beta chains form an alternating ring which encloses part of the gamma chain. F(1) is attached to F(0) by a central stalk formed by the gamma and epsilon chains, while a peripheral stalk is formed by the delta, b and b' chains.

The protein localises to the cellular thylakoid membrane. Functionally, f(1)F(0) ATP synthase produces ATP from ADP in the presence of a proton or sodium gradient. F-type ATPases consist of two structural domains, F(1) containing the extramembraneous catalytic core and F(0) containing the membrane proton channel, linked together by a central stalk and a peripheral stalk. During catalysis, ATP synthesis in the catalytic domain of F(1) is coupled via a rotary mechanism of the central stalk subunits to proton translocation. Component of the F(0) channel, it forms part of the peripheral stalk, linking F(1) to F(0). The b'-subunit is a diverged and duplicated form of b found in plants and photosynthetic bacteria. This chain is ATP synthase subunit b', found in Prochlorococcus marinus (strain MIT 9515).